Reading from the N-terminus, the 307-residue chain is Fructokinase (307 aa).

This sequence belongs to the carbohydrate kinase PfkB family.

It catalyses the reaction D-fructose + ATP = D-fructose 6-phosphate + ADP + H(+). This is Fructokinase (scrK) from Vibrio alginolyticus.